We begin with the raw amino-acid sequence, 362 residues long: Glutamine synthetase (362 aa).

The GS beta-grasp domain occupies 26-107; that stretch reads LIAEYIWIDS…VLSECWNADG (82 aa). Residues 114-362 form the GS catalytic domain; that stretch reads HRHEAAKLME…METCFGAVSE (249 aa).

The protein belongs to the glutamine synthetase family. Homooctamer.

It localises to the cytoplasm. The catalysed reaction is L-glutamate + NH4(+) + ATP = L-glutamine + ADP + phosphate + H(+). The sequence is that of Glutamine synthetase (gln-1) from Neurospora crassa (strain ATCC 24698 / 74-OR23-1A / CBS 708.71 / DSM 1257 / FGSC 987).